We begin with the raw amino-acid sequence, 1841 residues long: Cell division control protein 12 (1841 aa).

2 stretches are compositionally biased toward polar residues: residues 1 to 25 and 46 to 63; these read MRNS…TPSA and SIES…QSVT. Disordered stretches follow at residues 1–63, 78–134, and 152–181; these read MRNS…QSVT, NSHN…GPRL, and PPVH…RTKH. A GBD/FH3 domain is found at 232 to 620; the sequence is TRPPSLDQLI…RILLNSKVSN (389 aa). Residues 674–715 adopt a coiled-coil conformation; it reads LGAEDLIAKLNKEVEDQKDVILSQKRTNETLKTEIDALQKSH. Residues 740–972 enclose the FH1 domain; that stretch reads GSTNSKERII…VSPAVSNNIS (233 aa). In terms of domain architecture, FH2 spans 980 to 1391; it reads TGLTRRPTRR…QHRRLNLVNN (412 aa). Residues 1260–1290 are a coiled coil; the sequence is TEAAKLNIEAIEQECSELIRGCQNLQIDCDS. 3 disordered regions span residues 1445–1661, 1696–1715, and 1735–1758; these read EAPN…ENNL, TTTT…INTI, and KSNK…GSNK. Composition is skewed to polar residues over residues 1447-1456 and 1483-1497; these read PNTSTKSSPA and SEST…NITP. The span at 1499 to 1516 shows a compositional bias: basic and acidic residues; it reads KKGEVSSKAKKGYNYEKR. Residues 1539–1553 show a composition bias toward polar residues; it reads GRSASYTFSDPSSLE. Ser-1541 carries the post-translational modification Phosphoserine. A Phosphotyrosine modification is found at Tyr-1544. The segment covering 1554–1567 has biased composition (basic and acidic residues); that stretch reads DSNRQKPFNGEKFR. Positions 1568–1577 are enriched in basic residues; sequence RFSSKSRRGS. Positions 1594-1604 are enriched in polar residues; sequence INNNQTSPQNK. The span at 1605 to 1621 shows a compositional bias: basic and acidic residues; the sequence is PSKESLKSDTISNEKKV. Polar residues predominate over residues 1630-1641; it reads NLLTPTISNGTR.

The protein belongs to the formin homology family. BNI1 subfamily. Interacts with profilin and actin at the FH1 and FH2 domains respectively.

It localises to the nucleus. In terms of biological role, plays a role in the cell cycle. Involved in cytokinesis. Component of the cell division ring. In the absence of profilin, caps the barbed end of actin filaments, thus preventing subunit addition and dissociation. In the presence of profilin, nucleates actin filaments that grow rapidly from their barbed ends. In Schizosaccharomyces pombe (strain 972 / ATCC 24843) (Fission yeast), this protein is Cell division control protein 12 (cdc12).